An 86-amino-acid chain; its full sequence is UPF0297 protein LCABL_08470 (86 aa).

This sequence belongs to the UPF0297 family.

The polypeptide is UPF0297 protein LCABL_08470 (Lacticaseibacillus casei (strain BL23) (Lactobacillus casei)).